Reading from the N-terminus, the 839-residue chain is MDFVVDYQTYAMADTATPELPEPEPRLNLTSDAQSQPTGKLDLQFKLPDLQRYSNNNATLPVDNDGAGSKDLHKKMTHYAMSSIDKIQLSNPSKQLGQNSQDEKLSQQESQNFTNYEPKNLDLSKLVSPSSGSNKNTTNLVLSNKLSKILNNYTLINYQATVQLRKSLKVLEENKERLSLDEQKLMNPEYVGTLARRALRTDLESQLLKEHITVLEEFKPIIRRIKRLSSSVEKIQRTSEKLLSNETNEVPTNNVVLQEIDQYRLKAEQLKLKKKILLSIRDRFTLNQVEDDVITNGTIDNIFFEVVKKVINIKDESSFLLTLPNLNAGNALIMGVNEILEKTNKKIFNYLIDFLYSFESSSNLLNDHGTTEQESLNIFRKSLVFLSSDLELFNELLKRVTTLRSKSILDEFLSQFDMNSTTSKPIILSAHDPIRYIGDVLASVHSIIANEADFVKSLFDFQDEDLKDTPISILQQNKTFLKGIDNKLLNDIIQSLSNSCRIRIEQIVRFEENPIINFEIVRLLKLYRVMFERKGIQDDSSIINNLKSLEDISKNRIIGYYEDYMKQTVMAETKNSSDDLLPPEWLSEYMNKLVELFEIYEKTHAAEDEESEDNKLLSSKNLQTIVEQPIKDVLLKQLQTSFPLAKKNEKEKASLLTIEINCFDLIKSRLQPFEGLFAQDDDSRKITIWVCDKLKEYTKQMLTLQIKFLFENTGLDLYSNLVNMIFPVDSVKDELDYDMYLALRDNSLMELDMVRKNVHDKLNYYLPQALTDVQGNLLFKLTSPMIADEICDECFKKLSLFYNIFRKLLIHLYPNKKDQVFEILNFSTDEFDMLIGIDH.

Residues 14 to 38 (DTATPELPEPEPRLNLTSDAQSQPT) are disordered.

This sequence belongs to the COG6 family. In terms of assembly, component of the conserved oligomeric Golgi (COG or Sec34/Sec35) complex which consists of eight different proteins COG1-COG8.

The protein resides in the golgi apparatus membrane. Acts as a component of the peripheral membrane COG complex that is involved in intra-Golgi protein trafficking. COG is located at the cis-Golgi, and regulates tethering of retrograde intra-Golgi vesicles and possibly a number of other membrane trafficking events. The chain is Conserved oligomeric Golgi complex subunit 6 (COG6) from Saccharomyces cerevisiae (strain ATCC 204508 / S288c) (Baker's yeast).